A 465-amino-acid chain; its full sequence is BTB/POZ and MATH domain-containing protein 4 (465 aa).

The segment at 12-40 (LQRQNPLQKSEQQRRNFEMPSPPTTTSLS) is disordered. One can recognise an MATH domain in the interval 46–180 (NGSHSFTIKG…DDCLKINCTV (135 aa)). The BTB domain maps to 216 to 282 (SDITFNVSGE…IYKDALIEDA (67 aa)). 2 disordered regions span residues 395–429 (SGGGGKTRSVWGQFSDGGAETNGRQAQTWGDINGG) and 441–465 (VNANGSGRNNNDNNNSDDPMAELED). Over residues 442–458 (NANGSGRNNNDNNNSDD) the composition is skewed to low complexity.

The protein belongs to the Tdpoz family. As to quaternary structure, interacts with RAP2-4. Binds to MYB56 at the promoter of FLOWERING LOCUS T (FT). In terms of tissue distribution, ubiquitous.

The protein localises to the cytoplasm. It functions in the pathway protein modification; protein ubiquitination. May act as a substrate-specific adapter of an E3 ubiquitin-protein ligase complex (CUL3-RBX1-BTB) which mediates the ubiquitination and subsequent proteasomal degradation of target proteins. This chain is BTB/POZ and MATH domain-containing protein 4 (BPM4), found in Arabidopsis thaliana (Mouse-ear cress).